The following is a 221-amino-acid chain: Veficolin-1 (221 aa).

An N-terminal signal peptide occupies residues 1–25; the sequence is MTAWLDFPLALSPLVVVSMKGGSFG. The region spanning 50 to 104 is the Collagen-like domain; sequence QGQAGIPGIPGVPGTNGLPGAKGDLGPQGPPGERGSTGIPGKAGPKGDKGDQGEA. The interval 54–104 is disordered; the sequence is GIPGIPGVPGTNGLPGAKGDLGPQGPPGERGSTGIPGKAGPKGDKGDQGEA. In terms of domain architecture, Fibrinogen C-terminal spans 111 to 221; the sequence is QQQEAGAKDC…DFNNSKTFAK (111 aa). A disulfide bridge links Cys120 with Cys148.

It belongs to the ficolin lectin family. Veficolin subfamily. In terms of tissue distribution, expressed by the mandibular venom duct.

The protein resides in the secreted. Initiates complement activation and/or interferes in platelet aggregation and/or blood coagulation. The chain is Veficolin-1 from Varanus komodoensis (Komodo dragon).